The primary structure comprises 464 residues: Argininosuccinate lyase (464 aa).

It belongs to the lyase 1 family. Argininosuccinate lyase subfamily.

It is found in the cytoplasm. The catalysed reaction is 2-(N(omega)-L-arginino)succinate = fumarate + L-arginine. It participates in amino-acid biosynthesis; L-arginine biosynthesis; L-arginine from L-ornithine and carbamoyl phosphate: step 3/3. The polypeptide is Argininosuccinate lyase (Alcanivorax borkumensis (strain ATCC 700651 / DSM 11573 / NCIMB 13689 / SK2)).